Here is a 484-residue protein sequence, read N- to C-terminus: Probable sphingolipid transporter spinster homolog 2 (484 aa).

Positions 1-23 (MDVDGEGDRGQNPRIMERDSDSI) are disordered. The chain crosses the membrane as a helical span at residues 38–58 (LLFVFCVVNLINYIDRGAIAS). Asparagine 62 and asparagine 85 each carry an N-linked (GlcNAc...) asparagine glycan. 11 consecutive transmembrane segments (helical) span residues 93–113 (VLSS…ASLA), 122–142 (IGVG…SFDF), 147–167 (ICRM…APFI), 181–201 (AVFY…GGVV), 209–229 (AAFW…FVIK), 273–293 (VYVT…AYSY), 311–331 (IFGG…GVIL), 345–362 (LSVS…AFCF), 377–397 (LLVF…VKPS), 405–425 (MSTV…VGVL), and 436–456 (SLVL…GIFL). Serine 466 is modified (phosphoserine).

This sequence belongs to the major facilitator superfamily. Spinster (TC 2.A.1.49) family.

It is found in the late endosome membrane. The protein localises to the lysosome membrane. Functionally, probable sphingolipid transporter that plays a central role in endosomes and/or lysosomes storage. In Arabidopsis thaliana (Mouse-ear cress), this protein is Probable sphingolipid transporter spinster homolog 2.